A 139-amino-acid polypeptide reads, in one-letter code: uncharacterized protein (139 aa).

Residues 8-63 (LRELRRARKLTVNQLAVYSGISSATISKIENGKRGTPKPATIKKLAAVLKVPYENL) form the HTH cro/C1-type domain. A DNA-binding region (H-T-H motif) is located at residues 19-38 (VNQLAVYSGISSATISKIEN).

This is an uncharacterized protein from Bacillus subtilis (strain 168).